Here is a 21-residue protein sequence, read N- to C-terminus: Hydroxypicolinic acid-activating enzyme (21 aa).

In terms of biological role, involved in etamycin biosynthesis. This is Hydroxypicolinic acid-activating enzyme from Streptomyces griseoviridis.